A 295-amino-acid polypeptide reads, in one-letter code: Probable endonuclease 4 (295 aa).

Residues H78, H118, E154, D188, H191, H225, D238, H240, and E270 each contribute to the Zn(2+) site.

The protein belongs to the AP endonuclease 2 family. Zn(2+) serves as cofactor.

It catalyses the reaction Endonucleolytic cleavage to 5'-phosphooligonucleotide end-products.. Functionally, endonuclease IV plays a role in DNA repair. It cleaves phosphodiester bonds at apurinic or apyrimidinic (AP) sites, generating a 3'-hydroxyl group and a 5'-terminal sugar phosphate. The chain is Probable endonuclease 4 from Vibrio campbellii (strain ATCC BAA-1116).